A 256-amino-acid chain; its full sequence is Thiazole synthase (256 aa).

K98 serves as the catalytic Schiff-base intermediate with DXP. 1-deoxy-D-xylulose 5-phosphate-binding positions include G159, 185–186 (AG), and 207–208 (NT).

This sequence belongs to the ThiG family. Homotetramer. Forms heterodimers with either ThiH or ThiS.

It is found in the cytoplasm. It catalyses the reaction [ThiS sulfur-carrier protein]-C-terminal-Gly-aminoethanethioate + 2-iminoacetate + 1-deoxy-D-xylulose 5-phosphate = [ThiS sulfur-carrier protein]-C-terminal Gly-Gly + 2-[(2R,5Z)-2-carboxy-4-methylthiazol-5(2H)-ylidene]ethyl phosphate + 2 H2O + H(+). It participates in cofactor biosynthesis; thiamine diphosphate biosynthesis. In terms of biological role, catalyzes the rearrangement of 1-deoxy-D-xylulose 5-phosphate (DXP) to produce the thiazole phosphate moiety of thiamine. Sulfur is provided by the thiocarboxylate moiety of the carrier protein ThiS. In vitro, sulfur can be provided by H(2)S. In Aliivibrio fischeri (strain ATCC 700601 / ES114) (Vibrio fischeri), this protein is Thiazole synthase.